A 153-amino-acid polypeptide reads, in one-letter code: MAPAAATGGSTLPSGFSVFTTLPDLLFIFEFIFGGLVWILVASSLVPWPLVQGWVMFVSVFCFVATTTLIILYIIGAHGGETSWVTLDAAYHCTAALFYLSASVLEALATITMQDGFTYRHYHENIAAVVFSYIATLLYVVHAVFSLIRWKSS.

The Cytoplasmic portion of the chain corresponds to 1–24 (MAPAAATGGSTLPSGFSVFTTLPD). Positions 18-151 (VFTTLPDLLF…HAVFSLIRWK (134 aa)) constitute an MARVEL domain. The helical transmembrane segment at 25–46 (LLFIFEFIFGGLVWILVASSLV) threads the bilayer. The Extracellular segment spans residues 47–53 (PWPLVQG). A helical transmembrane segment spans residues 54-75 (WVMFVSVFCFVATTTLIILYII). Residues 76–92 (GAHGGETSWVTLDAAYH) lie on the Cytoplasmic side of the membrane. Residues 93–114 (CTAALFYLSASVLEALATITMQ) form a helical membrane-spanning segment. Over 115–125 (DGFTYRHYHEN) the chain is Extracellular. Residues 126–147 (IAAVVFSYIATLLYVVHAVFSL) form a helical membrane-spanning segment. Topologically, residues 148–153 (IRWKSS) are cytoplasmic.

It belongs to the MAL family. As to quaternary structure, interacts with PLP1. Post-translationally, lipoprotein.

It is found in the membrane. The protein resides in the cell membrane. May be involved in vesicular trafficking from the Golgi apparatus to the cell membrane. Plays a role in the maintenance of the myelin sheath, and in axon-glia and glia-glia interactions. This chain is Myelin and lymphocyte protein (MAL), found in Homo sapiens (Human).